The sequence spans 231 residues: Orotidine 5'-phosphate decarboxylase (231 aa).

Substrate is bound by residues D11, K33, 60–69, T120, R181, Q190, G210, and R211; that span reads DLKFHDIPNT. The Proton donor role is filled by K62.

It belongs to the OMP decarboxylase family. Type 1 subfamily. As to quaternary structure, homodimer.

The catalysed reaction is orotidine 5'-phosphate + H(+) = UMP + CO2. It participates in pyrimidine metabolism; UMP biosynthesis via de novo pathway; UMP from orotate: step 2/2. Catalyzes the decarboxylation of orotidine 5'-monophosphate (OMP) to uridine 5'-monophosphate (UMP). This is Orotidine 5'-phosphate decarboxylase from Vibrio atlanticus (strain LGP32) (Vibrio splendidus (strain Mel32)).